Here is a 242-residue protein sequence, read N- to C-terminus: ATP synthase subunit a (242 aa).

A run of 7 helical transmembrane segments spans residues Ile-23–Leu-43, Val-62–Leu-82, Tyr-84–Leu-104, His-113–Phe-133, Ile-143–Phe-163, Leu-176–Lys-196, and Leu-201–Ile-221.

The protein belongs to the ATPase A chain family. As to quaternary structure, F-type ATPases have 2 components, CF(1) - the catalytic core - and CF(0) - the membrane proton channel. CF(1) has five subunits: alpha(3), beta(3), gamma(1), delta(1), epsilon(1). CF(0) has three main subunits: a(1), b(2) and c(9-12). The alpha and beta chains form an alternating ring which encloses part of the gamma chain. CF(1) is attached to CF(0) by a central stalk formed by the gamma and epsilon chains, while a peripheral stalk is formed by the delta and b chains.

It localises to the cell inner membrane. In terms of biological role, key component of the proton channel; it plays a direct role in the translocation of protons across the membrane. The protein is ATP synthase subunit a of Anaplasma phagocytophilum (strain HZ).